The chain runs to 159 residues: Putative ribosomal RNA large subunit methyltransferase H (159 aa).

S-adenosyl-L-methionine is bound by residues L76, G108, and 127-132 (FSKMTF).

Belongs to the RNA methyltransferase RlmH family.

The protein resides in the cytoplasm. It catalyses the reaction pseudouridine(1915) in 23S rRNA + S-adenosyl-L-methionine = N(3)-methylpseudouridine(1915) in 23S rRNA + S-adenosyl-L-homocysteine + H(+). Functionally, specifically methylates the pseudouridine at position 1915 (m3Psi1915) in 23S rRNA. The polypeptide is Putative ribosomal RNA large subunit methyltransferase H (Methanococcus maripaludis (strain C6 / ATCC BAA-1332)).